The primary structure comprises 180 residues: Putative methyltransferase YrhH (180 aa).

This sequence belongs to the methyltransferase superfamily.

The sequence is that of Putative methyltransferase YrhH (yrhH) from Bacillus subtilis (strain 168).